Here is a 1235-residue protein sequence, read N- to C-terminus: Spike glycoprotein (1235 aa).

Positions 1 to 13 (MLFVFILLLPSCL) are cleaved as a signal peptide. Positions 1-330 (MLFVFILLLP…RRVPNLPDCK (330 aa)) are receptor binding site. The Extracellular portion of the chain corresponds to 14 to 1176 (GYIGDFRCIQ…GTYEMYVKWP (1163 aa)). Residues 15–296 (YIGDFRCIQT…SYISEIKCKT (282 aa)) enclose the BetaCoV S1-NTD domain. Intrachain disulfides connect C21-C158, C153-C187, C165-C246, C284-C294, and C329-C354. Residues N31, N60, and N134 are each glycosylated (N-linked (GlcNAc...) asparagine; by host). N-linked (GlcNAc...) asparagine; by host glycosylation is present at N192. The BetaCoV S1-CTD domain maps to 327–477 (PDCKIEEWLT…GINSGTTCST (151 aa)). An N-linked (GlcNAc...) asparagine; by host glycan is attached at N357. Disulfide bonds link C372–C425 and C384–C475. Residues N435, N536, N568, N576, N599, N648, and N665 are each glycosylated (N-linked (GlcNAc...) asparagine; by host). Fusion peptide stretches follow at residues 781-802 (SAIE…VEAY) and 800-820 (EAYN…VQSF). The N-linked (GlcNAc...) asparagine; by host glycan is linked to N804. C805 and C816 are joined by a disulfide. The tract at residues 881-931 (QKMIASAFNNALGAIQEGFDATNSALGKIQSVVNANAEALNNLLNQLSNRF) is heptad repeat 1. A coiled-coil region spans residues 910 to 954 (QSVVNANAEALNNLLNQLSNRFGAISASLQEILTRLDAVEAKAQI). 5 N-linked (GlcNAc...) asparagine; by host glycosylation sites follow: N1091, N1101, N1120, N1136, and N1157. Residues 1125–1165 (APDLSLDFEKLNVTFLDLTYEMNRIQDAIKKLNESYINLKE) are heptad repeat 2. A coiled-coil region spans residues 1138–1166 (TFLDLTYEMNRIQDAIKKLNESYINLKEV). Residues 1177–1197 (WYVWLLIGLAGVAVCVLLFFI) traverse the membrane as a helical segment. Topologically, residues 1198 to 1235 (CCCTGCGSCCFRKCGSCCDEYGGHQDSIVIHNISAHED) are cytoplasmic. Residues 1231-1235 (SAHED) carry the KxHxx motif.

This sequence belongs to the betacoronaviruses spike protein family. Homotrimer; each monomer consists of a S1 and a S2 subunit. The resulting peplomers protrude from the virus surface as spikes. In terms of processing, specific enzymatic cleavages in vivo yield mature proteins. The precursor is processed into S1 and S2 by host cell furin or another cellular protease to yield the mature S1 and S2 proteins. Additionally, a second cleavage leads to the release of a fusion peptide after viral attachment to host cell receptor. Post-translationally, the cytoplasmic Cys-rich domain is palmitoylated. Spike glycoprotein is digested within host endosomes.

The protein localises to the virion membrane. The protein resides in the host endoplasmic reticulum-Golgi intermediate compartment membrane. It localises to the host cell membrane. Its function is as follows. Attaches the virion to the cell membrane by interacting with host receptor, initiating the infection. In terms of biological role, mediates fusion of the virion and cellular membranes by acting as a class I viral fusion protein. Under the current model, the protein has at least three conformational states: pre-fusion native state, pre-hairpin intermediate state, and post-fusion hairpin state. During viral and target cell membrane fusion, the coiled coil regions (heptad repeats) assume a trimer-of-hairpins structure, positioning the fusion peptide in close proximity to the C-terminal region of the ectodomain. The formation of this structure appears to drive apposition and subsequent fusion of viral and target cell membranes. Functionally, acts as a viral fusion peptide which is unmasked following S2 cleavage occurring upon virus endocytosis. The chain is Spike glycoprotein from Mus musculus (Mouse).